A 156-amino-acid chain; its full sequence is Ribosomal RNA large subunit methyltransferase H (156 aa).

Residues leucine 72 and glycine 104 each coordinate S-adenosyl-L-methionine.

This sequence belongs to the RNA methyltransferase RlmH family. Homodimer.

The protein resides in the cytoplasm. The enzyme catalyses pseudouridine(1915) in 23S rRNA + S-adenosyl-L-methionine = N(3)-methylpseudouridine(1915) in 23S rRNA + S-adenosyl-L-homocysteine + H(+). Functionally, specifically methylates the pseudouridine at position 1915 (m3Psi1915) in 23S rRNA. This is Ribosomal RNA large subunit methyltransferase H from Maricaulis maris (strain MCS10) (Caulobacter maris).